A 333-amino-acid chain; its full sequence is HTH-type transcriptional repressor PurR (333 aa).

The region spanning 2-56 (ATIKDVAKLASVSTTTVSHVINKTRFVAEATQKRVWEAVEELNYAPSAVARSLKC) is the HTH lacI-type domain. The H-T-H motif DNA-binding region spans 4–23 (IKDVAKLASVSTTTVSHVIN). A DNA-binding region spans residues 48–56 (SAVARSLKC). Residues F73, K189, T191, F220, and D274 each contribute to the hypoxanthine site.

In terms of assembly, homodimer.

Its pathway is purine metabolism; purine nucleotide biosynthesis [regulation]. Its function is as follows. Is the main repressor of the genes involved in the de novo synthesis of purine nucleotides, regulating purB, purC, purEK, purF, purHD, purL, purMN and guaBA expression. PurR is allosterically activated to bind its cognate DNA by binding the purine corepressors, hypoxanthine or guanine, thereby effecting transcription repression. This Aliivibrio salmonicida (strain LFI1238) (Vibrio salmonicida (strain LFI1238)) protein is HTH-type transcriptional repressor PurR.